A 258-amino-acid polypeptide reads, in one-letter code: Trans-aconitate 2-methyltransferase (258 aa).

The protein belongs to the methyltransferase superfamily. Tam family.

Its subcellular location is the cytoplasm. It catalyses the reaction trans-aconitate + S-adenosyl-L-methionine = (E)-3-(methoxycarbonyl)pent-2-enedioate + S-adenosyl-L-homocysteine. In terms of biological role, catalyzes the S-adenosylmethionine monomethyl esterification of trans-aconitate. This chain is Trans-aconitate 2-methyltransferase, found in Acidovorax sp. (strain JS42).